Consider the following 568-residue polypeptide: Oxygen-dependent choline dehydrogenase (568 aa).

8–37 (DYIIIGAGSAGNTLAARLTEDAGVTVLLLE) contributes to the FAD binding site. Catalysis depends on histidine 477, which acts as the Proton acceptor.

Belongs to the GMC oxidoreductase family. The cofactor is FAD.

The enzyme catalyses choline + A = betaine aldehyde + AH2. It catalyses the reaction betaine aldehyde + NAD(+) + H2O = glycine betaine + NADH + 2 H(+). It functions in the pathway amine and polyamine biosynthesis; betaine biosynthesis via choline pathway; betaine aldehyde from choline (cytochrome c reductase route): step 1/1. In terms of biological role, involved in the biosynthesis of the osmoprotectant glycine betaine. Catalyzes the oxidation of choline to betaine aldehyde and betaine aldehyde to glycine betaine at the same rate. The protein is Oxygen-dependent choline dehydrogenase of Pseudomonas syringae pv. tomato (strain ATCC BAA-871 / DC3000).